We begin with the raw amino-acid sequence, 82 residues long: Sec-independent protein translocase protein TatA (82 aa).

The helical transmembrane segment at 1–21 threads the bilayer; that stretch reads MGGISIWQLLIIAVIIVLLFG. The tract at residues 48–82 is disordered; it reads PAKEAKKDADFVPQNLEKKEAETVEKQKQNDKEQA.

It belongs to the TatA/E family. As to quaternary structure, the Tat system comprises two distinct complexes: a TatABC complex, containing multiple copies of TatA, TatB and TatC subunits, and a separate TatA complex, containing only TatA subunits. Substrates initially bind to the TatABC complex, which probably triggers association of the separate TatA complex to form the active translocon.

The protein localises to the cell inner membrane. Part of the twin-arginine translocation (Tat) system that transports large folded proteins containing a characteristic twin-arginine motif in their signal peptide across membranes. TatA could form the protein-conducting channel of the Tat system. This is Sec-independent protein translocase protein TatA from Aliivibrio fischeri (strain ATCC 700601 / ES114) (Vibrio fischeri).